The chain runs to 746 residues: Alpha-1,4-glucan:maltose-1-phosphate maltosyltransferase (746 aa).

Positions 1 to 43 are disordered; the sequence is MAAVQHRATTRTSNTDNSTTKTKSKATSARKSPATKRKRVSAE. The span at 10-32 shows a compositional bias: low complexity; sequence TRTSNTDNSTTKTKSKATSARKS. 3 residues coordinate alpha-maltose 1-phosphate: Lys-343, Gln-403, and Asp-438. Asp-473 (nucleophile) is an active-site residue. Asn-474 contributes to the alpha-maltose 1-phosphate binding site. The active-site Proton donor is Glu-502. 612-613 is a binding site for alpha-maltose 1-phosphate; the sequence is KY.

The protein belongs to the glycosyl hydrolase 13 family. GlgE subfamily. Homodimer.

The catalysed reaction is alpha-maltose 1-phosphate + [(1-&gt;4)-alpha-D-glucosyl](n) = [(1-&gt;4)-alpha-D-glucosyl](n+2) + phosphate. Maltosyltransferase that uses maltose 1-phosphate (M1P) as the sugar donor to elongate linear or branched alpha-(1-&gt;4)-glucans. Is involved in a branched alpha-glucan biosynthetic pathway from trehalose, together with TreS, Mak and GlgB. This is Alpha-1,4-glucan:maltose-1-phosphate maltosyltransferase from Bifidobacterium longum (strain NCC 2705).